We begin with the raw amino-acid sequence, 152 residues long: UPF0336 protein Tfu_2666 (152 aa).

A MaoC-like domain is found at 7 to 116 (YLGRAYELPE…TTITDIKSLA (110 aa)).

Belongs to the UPF0336 family.

The chain is UPF0336 protein Tfu_2666 from Thermobifida fusca (strain YX).